The chain runs to 106 residues: A-type ATP synthase subunit F (106 aa).

It belongs to the V-ATPase F subunit family. Has multiple subunits with at least A(3), B(3), C, D, E, F, H, I and proteolipid K(x).

The protein localises to the cell membrane. In terms of biological role, component of the A-type ATP synthase that produces ATP from ADP in the presence of a proton gradient across the membrane. In Methanothermobacter thermautotrophicus (strain ATCC 29096 / DSM 1053 / JCM 10044 / NBRC 100330 / Delta H) (Methanobacterium thermoautotrophicum), this protein is A-type ATP synthase subunit F.